The following is a 1234-amino-acid chain: Protein Jumonji (1234 aa).

Over residues M1–I11 the composition is skewed to basic residues. 4 disordered regions span residues M1–P22, A68–R150, L169–T339, and R354–G548. Residue S78 is modified to Phosphoserine. Low complexity predominate over residues S86–S98. Residues P104 to R110 carry the Nuclear localization signal motif. Polar residues predominate over residues F117–P129. The tract at residues A141–P170 is sufficient for interaction with the PRC2 complex. Acidic residues predominate over residues Q180–E193. Over residues A197–P210 the composition is skewed to polar residues. Basic residues predominate over residues R211–N221. Residues K244–Q264 show a composition bias toward basic and acidic residues. Positions A265 to A285 are enriched in low complexity. 2 stretches are compositionally biased toward polar residues: residues S304–A322 and S369–A384. K378 carries the N6-acetyllysine modification. Residues C418–E440 show a composition bias toward basic and acidic residues. Position 449 is a phosphoserine (S449). 2 stretches are compositionally biased toward basic and acidic residues: residues V482–N494 and S529–S544. Positions I555–E596 constitute a JmjN domain. The ARID domain occupies W619–P711. Positions G872–P876 match the GSGFP motif motif. The JmjC domain maps to P882–K1046. The segment at E1206 to S1234 is disordered.

The protein belongs to the JARID2 family. Associates with the PRC2 complex, which consists of the core components EED, EZH1 or EZH2, SUZ12, and RBBP4, and various combinations of accessory subunits including AEBP2, JARID2, PHF19, MTF2 and EPOP. Found in a monomeric PRC2.2 (class 2) complex consisting of at least SUZ12, RBBP4, AEBP2 and JARID2. Facilitates nucleosome binding of the PRC2 complex. Interacts with SUZ12 (via C2H2-type zinc finger domain); the interaction is direct; competes with EPOP for SUZ12 binding. Interacts with histone methyltransferases EHMT1/GLP1 and EHMT2/G9a. Interacts with GATA4 (via the N-terminal region). Interacts with NKX2-5 (via the C-terminal region). Interacts with RB1. Interacts with ZNF496. Interacts with ESRRB. Interacts with DDX18; this interaction inhibits the PRC2 complex. In terms of tissue distribution, widely expressed in embryos. In adults, expressed at high levels in heart, skeletal muscle, brain and thymus.

Its subcellular location is the nucleus. In terms of biological role, regulator of histone methyltransferase complexes that plays an essential role in embryonic development, including heart and liver development, neural tube fusion process and hematopoiesis. Acts as an accessory subunit for the core PRC2 (Polycomb repressive complex 2) complex, which mediates histone H3K27 (H3K27me3) trimethylation on chromatin. Binds DNA and mediates the recruitment of the PRC2 complex to target genes in embryonic stem cells, thereby playing a key role in stem cell differentiation and normal embryonic development. In cardiac cells, it is required to repress expression of cyclin-D1 (CCND1) by activating methylation of 'Lys-9' of histone H3 (H3K9me) by the GLP1/EHMT1 and G9a/EHMT2 histone methyltransferases. Also acts as a transcriptional repressor of ANF via its interaction with GATA4 and NKX2-5. Participates in the negative regulation of cell proliferation signaling. Does not have histone demethylase activity. In Mus musculus (Mouse), this protein is Protein Jumonji (Jarid2).